Here is a 201-residue protein sequence, read N- to C-terminus: MAVEALHCGLNPRGIDHPAHAEGIKLQIEGEGVESQSIKNKNFQKVPDQKGTPKRLQAEAETAKSATVKLSKPVALWTQQDVCKWLKKHCPNQYQIYSESFKQHDITGRALLRLTDKKLERMGIAQENLRQHILQQVLQLKVREEVRNLQLLTQGTLLLPDGWMEGEMRRKSTLLLGQTGVRENLLLFLRRISFIENSIQI.

The region spanning 77 to 143 (WTQQDVCKWL…LQQVLQLKVR (67 aa)) is the SAM domain.

The polypeptide is Sterile alpha motif domain-containing protein 12 (SAMD12) (Pongo abelii (Sumatran orangutan)).